The chain runs to 250 residues: Phosphoribosylaminoimidazole-succinocarboxamide synthase (250 aa).

This sequence belongs to the SAICAR synthetase family.

It catalyses the reaction 5-amino-1-(5-phospho-D-ribosyl)imidazole-4-carboxylate + L-aspartate + ATP = (2S)-2-[5-amino-1-(5-phospho-beta-D-ribosyl)imidazole-4-carboxamido]succinate + ADP + phosphate + 2 H(+). Its pathway is purine metabolism; IMP biosynthesis via de novo pathway; 5-amino-1-(5-phospho-D-ribosyl)imidazole-4-carboxamide from 5-amino-1-(5-phospho-D-ribosyl)imidazole-4-carboxylate: step 1/2. The protein is Phosphoribosylaminoimidazole-succinocarboxamide synthase of Chloroflexus aggregans (strain MD-66 / DSM 9485).